The sequence spans 434 residues: ATP-dependent protease ATPase subunit HslU (434 aa).

ATP-binding positions include isoleucine 18, 60-65 (GVGKTE), aspartate 247, glutamate 312, and arginine 384.

It belongs to the ClpX chaperone family. HslU subfamily. A double ring-shaped homohexamer of HslV is capped on each side by a ring-shaped HslU homohexamer. The assembly of the HslU/HslV complex is dependent on binding of ATP.

The protein localises to the cytoplasm. Functionally, ATPase subunit of a proteasome-like degradation complex; this subunit has chaperone activity. The binding of ATP and its subsequent hydrolysis by HslU are essential for unfolding of protein substrates subsequently hydrolyzed by HslV. HslU recognizes the N-terminal part of its protein substrates and unfolds these before they are guided to HslV for hydrolysis. In Brucella ovis (strain ATCC 25840 / 63/290 / NCTC 10512), this protein is ATP-dependent protease ATPase subunit HslU.